We begin with the raw amino-acid sequence, 805 residues long: DNA gyrase subunit B (805 aa).

In terms of domain architecture, Toprim spans 435 to 550 (SEIFIVEGDS…RGYIYIAQPP (116 aa)). Positions 441, 515, and 517 each coordinate Mg(2+).

The protein belongs to the type II topoisomerase GyrB family. In terms of assembly, heterotetramer, composed of two GyrA and two GyrB chains. In the heterotetramer, GyrA contains the active site tyrosine that forms a transient covalent intermediate with DNA, while GyrB binds cofactors and catalyzes ATP hydrolysis. Mg(2+) is required as a cofactor. The cofactor is Mn(2+). It depends on Ca(2+) as a cofactor.

The protein resides in the cytoplasm. It carries out the reaction ATP-dependent breakage, passage and rejoining of double-stranded DNA.. Functionally, a type II topoisomerase that negatively supercoils closed circular double-stranded (ds) DNA in an ATP-dependent manner to modulate DNA topology and maintain chromosomes in an underwound state. Negative supercoiling favors strand separation, and DNA replication, transcription, recombination and repair, all of which involve strand separation. Also able to catalyze the interconversion of other topological isomers of dsDNA rings, including catenanes and knotted rings. Type II topoisomerases break and join 2 DNA strands simultaneously in an ATP-dependent manner. The chain is DNA gyrase subunit B from Caulobacter vibrioides (strain ATCC 19089 / CIP 103742 / CB 15) (Caulobacter crescentus).